The primary structure comprises 511 residues: Exodeoxyribonuclease 7 large subunit (511 aa).

Belongs to the XseA family. In terms of assembly, heterooligomer composed of large and small subunits.

The protein resides in the cytoplasm. The catalysed reaction is Exonucleolytic cleavage in either 5'- to 3'- or 3'- to 5'-direction to yield nucleoside 5'-phosphates.. In terms of biological role, bidirectionally degrades single-stranded DNA into large acid-insoluble oligonucleotides, which are then degraded further into small acid-soluble oligonucleotides. This Brucella abortus (strain S19) protein is Exodeoxyribonuclease 7 large subunit.